A 435-amino-acid polypeptide reads, in one-letter code: MSSPGTESAGKSLQYRVDHLLSAVENELQAGSEKGDPTERELRVGLEESELWLRFKELTNEMIVTKNGRRMFPVLKVNVSGLDPNAMYSFLLDFVAADNHRWKYVNGEWVPGGKPEPQAPSCVYIHPDSPNFGAHWMKAPVSFSKVKLTNKLNGGGQIMLNSLHKYEPRIHIVRVGGPQRMITSHCFPETQFIAVTAYQNEEITALKIKYNPFAKAFLDAKERSDHKEMMEEPGDSQQPGYSQWGWLLPGTSTLCPPANPHPQFGGALSLPSTHSCDRYPTLRSHRSSPYPSPYAHRNNSPTYSDNSPACLSMLQSHDNWSSLGMPAHPSMLPVSHNASPPTSSSQYPSLWSVSNGAVTPGSQAAAVSNGLGAQFFRGSPAHYTPLTHPVSAPSSSGSPLYEGAAAATDIVDSQYDAAAQGRLIASWTPVSPPSM.

A DNA-binding region (T-box) is located at residues 51 to 219; the sequence is LWLRFKELTN…YNPFAKAFLD (169 aa). Residues 279–308 are disordered; it reads YPTLRSHRSSPYPSPYAHRNNSPTYSDNSP. The segment covering 297 to 308 has biased composition (polar residues); that stretch reads RNNSPTYSDNSP.

As to quaternary structure, monomer. As to expression, detected in testis, but not in other, normal tissues. Detected in lung tumors (at protein level).

It localises to the nucleus. In terms of biological role, involved in the transcriptional regulation of genes required for mesoderm formation and differentiation. Binds to a palindromic T site 5'-TTCACACCTAGGTGTGAA-3' DNA sequence and activates gene transcription when bound to such a site. In Homo sapiens (Human), this protein is T-box transcription factor T.